Here is a 1800-residue protein sequence, read N- to C-terminus: U3 small nucleolar RNA-associated protein 10 (1800 aa).

HEAT repeat units lie at residues 426–467 (FTQS…TTPA) and 581–619 (DVDL…LYKK). 2 helical membrane passes run 944 to 964 (IQSG…AIVN) and 1000 to 1020 (ALLL…HSVM). HEAT repeat units follow at residues 1043 to 1081 (DQTI…AFEH), 1250 to 1288 (TLSL…QNPE), 1294 to 1333 (QHRM…KYGR), and 1755 to 1793 (LALL…VLGE).

The protein belongs to the HEATR1/UTP10 family. Component of the ribosomal small subunit (SSU) processome.

Its subcellular location is the nucleus. It localises to the nucleolus. It is found in the membrane. Its function is as follows. Involved in nucleolar processing of pre-18S ribosomal RNA. Involved in ribosome biosynthesis. This Aspergillus niger (strain ATCC MYA-4892 / CBS 513.88 / FGSC A1513) protein is U3 small nucleolar RNA-associated protein 10.